Reading from the N-terminus, the 353-residue chain is GDSL esterase/lipase APG (353 aa).

A signal peptide spans M1–A25. The active-site Nucleophile is the S37. N197 and N320 each carry an N-linked (GlcNAc...) asparagine glycan. Residues D328 and H331 contribute to the active site.

The protein belongs to the 'GDSL' lipolytic enzyme family.

The protein localises to the secreted. This chain is GDSL esterase/lipase APG (APG), found in Arabidopsis thaliana (Mouse-ear cress).